Consider the following 170-residue polypeptide: VIP peptides (170 aa).

The signal sequence occupies residues Met-1–Phe-20. A propeptide spanning residues Ser-21 to Ala-79 is cleaved from the precursor. Ser-76 is modified (phosphoserine). The residue at position 107 (Met-107) is a Methionine amide. Position 152 is an asparagine amide (Asn-152). The propeptide occupies Ser-156–Lys-170.

This sequence belongs to the glucagon family.

The protein resides in the secreted. Functionally, VIP is a neuropeptide involved in a diverse array of physiological processes through activating the PACAP subfamily of class B1 G protein-coupled receptors: VIP receptor 1 (VPR1) and VIP receptor 2 (VPR2). Abundantly expressed throughout the CNS and peripheral nervous systems where they primarily exert neuroprotective and immune modulatory roles. Also causes vasodilation, lowers arterial blood pressure, stimulates myocardial contractility, increases glycogenolysis and relaxes the smooth muscle of trachea, stomach and gall bladder. In terms of biological role, PHM-27 and PHV-42 are two bioactive forms from proteolysis of the same precursor protein, that cause vasodilation. PHM-27 is a potent agonist of the calcitonin receptor CALCR, with similar efficacy as calcitonin. In Homo sapiens (Human), this protein is VIP peptides.